The primary structure comprises 200 residues: ATP-dependent Clp protease proteolytic subunit 2 (200 aa).

The active-site Nucleophile is Ser-101. His-126 is a catalytic residue.

Belongs to the peptidase S14 family. Fourteen ClpP subunits assemble into 2 heptameric rings which stack back to back to give a disk-like structure with a central cavity, resembling the structure of eukaryotic proteasomes.

It is found in the cytoplasm. The enzyme catalyses Hydrolysis of proteins to small peptides in the presence of ATP and magnesium. alpha-casein is the usual test substrate. In the absence of ATP, only oligopeptides shorter than five residues are hydrolyzed (such as succinyl-Leu-Tyr-|-NHMec, and Leu-Tyr-Leu-|-Tyr-Trp, in which cleavage of the -Tyr-|-Leu- and -Tyr-|-Trp bonds also occurs).. In terms of biological role, cleaves peptides in various proteins in a process that requires ATP hydrolysis. Has a chymotrypsin-like activity. Plays a major role in the degradation of misfolded proteins. The polypeptide is ATP-dependent Clp protease proteolytic subunit 2 (Prochlorococcus marinus (strain MIT 9313)).